The sequence spans 1362 residues: DNA-directed RNA polymerase subunit beta' (1362 aa).

The segment covering 1–14 has biased composition (basic residues); sequence MTSSSKSRKSKSSK. Residues 1–39 are disordered; that stretch reads MTSSSKSRKSKSSKASKAAKEAPVSASRPLSKTPPPFRN. Low complexity predominate over residues 15 to 27; the sequence is ASKAAKEAPVSAS. Residues Cys-248, Cys-315, Cys-322, and Cys-325 each coordinate Zn(2+). Positions 1316–1336 are disordered; it reads TRHNIDPSASNFAAFTRPDAD.

The protein belongs to the RNA polymerase beta' chain family. RpoC2 subfamily. As to quaternary structure, in cyanobacteria the RNAP catalytic core is composed of 2 alpha, 1 beta, 1 beta', 1 gamma and 1 omega subunit. When a sigma factor is associated with the core the holoenzyme is formed, which can initiate transcription. Zn(2+) is required as a cofactor.

It catalyses the reaction RNA(n) + a ribonucleoside 5'-triphosphate = RNA(n+1) + diphosphate. In terms of biological role, DNA-dependent RNA polymerase catalyzes the transcription of DNA into RNA using the four ribonucleoside triphosphates as substrates. The polypeptide is DNA-directed RNA polymerase subunit beta' (Synechococcus sp. (strain CC9605)).